Reading from the N-terminus, the 469-residue chain is MNPNQKTITIGSVSLTIATVCFLMQIAILATTVTLHFKQHECDSPASNQVMPCEPIIIERNITEIVYLNNTTIEKEICPEVVEYRNWSKPQCQITGFAPFSKDNSIRLSAGGDIWVTREPYVSCDPGKCYQFALGQGTTLDNKHSNGTIHDRIPHRTLLMNELGVPFHLGTKQVCVAWSSSSCHDGKAWLHVCVTGDDRNATASFIYDGRLVDSIGSWSQNILRTQESECVCINGTCTVVMTDGSASGRADTRILFIKEGKIVHISPLSGSAQHIEECSCYPRYPDVRCICRDNWKGSNRPVIDINMEDYSIDSSYVCSGLVGDTPRNDDSSSNSNCRDPNNERGNPGVKGWAFDNGDDVWMGRTINKESRSGYETFKVIGGWSTPNSKSQVNRQVIVDNNNWSGYSGIFSVEGKSCINRCFYVELIRGRPQETRVWWTSNSIVVFCGTSGTYGTGSWPDGANINFMPI.

At methionine 1 to lysine 6 the chain is on the intravirion side. A helical transmembrane segment spans residues threonine 7–leucine 29. The involved in apical transport and lipid raft association stretch occupies residues glycine 11–valine 33. The Virion surface portion of the chain corresponds to alanine 30 to isoleucine 469. The tract at residues histidine 36–serine 88 is hypervariable stalk region. N-linked (GlcNAc...) asparagine; by host glycans are attached at residues asparagine 61, asparagine 69, asparagine 70, and asparagine 86. The tract at residues glutamine 91–isoleucine 469 is head of neuraminidase. Cystine bridges form between cysteine 92-cysteine 417, cysteine 124-cysteine 129, cysteine 183-cysteine 230, cysteine 232-cysteine 237, cysteine 278-cysteine 291, cysteine 280-cysteine 289, cysteine 318-cysteine 337, and cysteine 421-cysteine 447. Residue arginine 118 participates in substrate binding. Asparagine 146 is a glycosylation site (N-linked (GlcNAc...) asparagine; by host). Aspartate 151 serves as the catalytic Proton donor/acceptor. A substrate-binding site is contributed by arginine 152. 2 N-linked (GlcNAc...) asparagine; by host glycosylation sites follow: asparagine 200 and asparagine 234. Glutamate 276–glutamate 277 lines the substrate pocket. Arginine 292 provides a ligand contact to substrate. Residues aspartate 293, glycine 297, and aspartate 324 each contribute to the Ca(2+) site. The segment at threonine 325 to valine 349 is disordered. Substrate is bound at residue arginine 371. An N-linked (GlcNAc...) asparagine; by host glycan is attached at asparagine 402. The active-site Nucleophile is the tyrosine 406.

The protein belongs to the glycosyl hydrolase 34 family. In terms of assembly, homotetramer. Ca(2+) serves as cofactor. In terms of processing, N-glycosylated.

Its subcellular location is the virion membrane. The protein resides in the host apical cell membrane. The enzyme catalyses Hydrolysis of alpha-(2-&gt;3)-, alpha-(2-&gt;6)-, alpha-(2-&gt;8)- glycosidic linkages of terminal sialic acid residues in oligosaccharides, glycoproteins, glycolipids, colominic acid and synthetic substrates.. Inhibited by the neuraminidase inhibitors zanamivir (Relenza) and oseltamivir (Tamiflu). These drugs interfere with the release of progeny virus from infected cells and are effective against all influenza strains. Resistance to neuraminidase inhibitors is quite rare. Functionally, catalyzes the removal of terminal sialic acid residues from viral and cellular glycoconjugates. Cleaves off the terminal sialic acids on the glycosylated HA during virus budding to facilitate virus release. Additionally helps virus spread through the circulation by further removing sialic acids from the cell surface. These cleavages prevent self-aggregation and ensure the efficient spread of the progeny virus from cell to cell. Otherwise, infection would be limited to one round of replication. Described as a receptor-destroying enzyme because it cleaves a terminal sialic acid from the cellular receptors. May facilitate viral invasion of the upper airways by cleaving the sialic acid moieties on the mucin of the airway epithelial cells. Likely to plays a role in the budding process through its association with lipid rafts during intracellular transport. May additionally display a raft-association independent effect on budding. Plays a role in the determination of host range restriction on replication and virulence. Sialidase activity in late endosome/lysosome traffic seems to enhance virus replication. The polypeptide is Neuraminidase (Influenza A virus (strain A/RI/5-/1957 H2N2)).